The following is a 146-amino-acid chain: Hemoglobin subunit beta-1/2 (146 aa).

Residues 2–146 (EWTDKERSII…VVSALGKQYH (145 aa)) form the Globin domain. Residues His-63 and His-92 each contribute to the heme b site.

This sequence belongs to the globin family. Hb1 is a heterotetramer of two alpha-1 chains and two beta chains. Hb2 is a heterotetramer of two alpha-2 chains and two beta chains. In terms of tissue distribution, red blood cells.

Its function is as follows. Involved in oxygen transport from gills to the various peripheral tissues. This chain is Hemoglobin subunit beta-1/2, found in Trematomus newnesi (Dusky notothen).